The chain runs to 165 residues: Ribosome maturation factor RimM (165 aa).

The region spanning 94–165 (EDEFYIADLT…YVILNYQREA (72 aa)) is the PRC barrel domain.

Belongs to the RimM family. In terms of assembly, binds ribosomal protein uS19.

The protein localises to the cytoplasm. Functionally, an accessory protein needed during the final step in the assembly of 30S ribosomal subunit, possibly for assembly of the head region. Essential for efficient processing of 16S rRNA. May be needed both before and after RbfA during the maturation of 16S rRNA. It has affinity for free ribosomal 30S subunits but not for 70S ribosomes. The chain is Ribosome maturation factor RimM from Rickettsia rickettsii (strain Sheila Smith).